The chain runs to 369 residues: Peptide chain release factor 2 (369 aa).

Glutamine 247 carries the post-translational modification N5-methylglutamine.

It belongs to the prokaryotic/mitochondrial release factor family. Methylated by PrmC. Methylation increases the termination efficiency of RF2.

Its subcellular location is the cytoplasm. Peptide chain release factor 2 directs the termination of translation in response to the peptide chain termination codons UGA and UAA. In Phenylobacterium zucineum (strain HLK1), this protein is Peptide chain release factor 2.